We begin with the raw amino-acid sequence, 220 residues long: uncharacterized protein (220 aa).

4 helical membrane-spanning segments follow: residues 9 to 29 (LWIT…GSTQ), 54 to 74 (YAVH…FLAV), 105 to 125 (VQGI…IHLW), and 177 to 197 (VLAV…VIEM).

Its subcellular location is the cell membrane. This is an uncharacterized protein from Sinorhizobium fredii (strain NBRC 101917 / NGR234).